The following is a 482-amino-acid chain: Carbamoyl phosphate synthase large chain, N-terminal section (482 aa).

Positions 1-398 are carboxyphosphate synthetic domain; the sequence is MESIKKVMVF…ALQKAIRSLD (398 aa). 12 residues coordinate ATP: R126, R166, G172, G173, E205, V207, E212, G238, I239, H240, Q281, and E295. One can recognise an ATP-grasp domain in the interval 130-324; the sequence is AEAMAEINEP…IARIAAKIAI (195 aa). Positions 281, 295, and 297 each coordinate Mg(2+). Positions 281, 295, and 297 each coordinate Mn(2+).

Belongs to the CarB family. Composed of two chains; the small (or glutamine) chain promotes the hydrolysis of glutamine to ammonia, which is used by the large (or ammonia) chain to synthesize carbamoyl phosphate. Tetramer of heterodimers (alpha,beta)4. It depends on Mg(2+) as a cofactor. Mn(2+) serves as cofactor.

The enzyme catalyses hydrogencarbonate + L-glutamine + 2 ATP + H2O = carbamoyl phosphate + L-glutamate + 2 ADP + phosphate + 2 H(+). It catalyses the reaction hydrogencarbonate + NH4(+) + 2 ATP = carbamoyl phosphate + 2 ADP + phosphate + 2 H(+). The protein operates within amino-acid biosynthesis; L-arginine biosynthesis; carbamoyl phosphate from bicarbonate: step 1/1. Its pathway is pyrimidine metabolism; UMP biosynthesis via de novo pathway; (S)-dihydroorotate from bicarbonate: step 1/3. Large subunit of the glutamine-dependent carbamoyl phosphate synthetase (CPSase). CPSase catalyzes the formation of carbamoyl phosphate from the ammonia moiety of glutamine, carbonate, and phosphate donated by ATP, constituting the first step of 2 biosynthetic pathways, one leading to arginine and/or urea and the other to pyrimidine nucleotides. The large subunit (synthetase) binds the substrates ammonia (free or transferred from glutamine from the small subunit), hydrogencarbonate and ATP and carries out an ATP-coupled ligase reaction, activating hydrogencarbonate by forming carboxy phosphate which reacts with ammonia to form carbamoyl phosphate. The protein is Carbamoyl phosphate synthase large chain, N-terminal section (carB1) of Methanocaldococcus jannaschii (strain ATCC 43067 / DSM 2661 / JAL-1 / JCM 10045 / NBRC 100440) (Methanococcus jannaschii).